The chain runs to 298 residues: N-acetylmuramic acid 6-phosphate etherase (298 aa).

An SIS domain is found at 55-218 (IHTQVSGGGR…STGLMIKSGK (164 aa)). The active-site Proton donor is the Glu-83. Residue Glu-114 is part of the active site.

Belongs to the GCKR-like family. MurNAc-6-P etherase subfamily. Homodimer.

It catalyses the reaction N-acetyl-D-muramate 6-phosphate + H2O = N-acetyl-D-glucosamine 6-phosphate + (R)-lactate. The protein operates within amino-sugar metabolism; 1,6-anhydro-N-acetylmuramate degradation. Its pathway is amino-sugar metabolism; N-acetylmuramate degradation. It participates in cell wall biogenesis; peptidoglycan recycling. Its function is as follows. Specifically catalyzes the cleavage of the D-lactyl ether substituent of MurNAc 6-phosphate, producing GlcNAc 6-phosphate and D-lactate. Together with AnmK, is also required for the utilization of anhydro-N-acetylmuramic acid (anhMurNAc) either imported from the medium or derived from its own cell wall murein, and thus plays a role in cell wall recycling. The protein is N-acetylmuramic acid 6-phosphate etherase of Escherichia coli O127:H6 (strain E2348/69 / EPEC).